The chain runs to 454 residues: MDRATVSLIVLAAGQGTRMNSDLPKVLHPLGAAPMLHHALRAGQSLEPERVVVVAGHGAEAVAKAARAFDESIEVVVQAEQLGTAHAVAQAAPLLADAPGEAVVLYGDTPFIRPETLERMLDLRSRHAVVVLGFEATDPGRYGRLVTRGEELDRIVEWKDATDEERTISLCNSGVICAEAGLLLALVSEVGNANAAGEYYLTDVVALARVRGLSAGVAICDEAETLGVNTRAQLAEAEAEFQKRARAAALEDGVTLTAPDTVFFALDTFLGRDAIVGPNVVFGPGVTVESGAEIRAFCHLEGCHISRGATVGPFARLRPGAELAEDVHVGNFVEIKNAVLDEGVKVGHLTYLGDAHVGEHTNIGAGTVTCNYDGVMKHRTEIGAHAFIGSDTMLVAPVTVGARAMTASGSVITENVPAEALALGRARQVTKPGMATRLMEMFRAAKAAKKKEAP.

A pyrophosphorylase region spans residues 1–231 (MDRATVSLIV…EAETLGVNTR (231 aa)). UDP-N-acetyl-alpha-D-glucosamine-binding positions include 11-14 (LAAG), Lys-25, Gln-78, 83-84 (GT), 106-108 (YGD), Gly-143, Glu-157, Asn-172, and Asn-229. Residue Asp-108 coordinates Mg(2+). Residue Asn-229 coordinates Mg(2+). Residues 232 to 252 (AQLAEAEAEFQKRARAAALED) form a linker region. Residues 253-454 (GVTLTAPDTV…AKAAKKKEAP (202 aa)) form an N-acetyltransferase region. Residues Arg-318 and Lys-336 each coordinate UDP-N-acetyl-alpha-D-glucosamine. Catalysis depends on His-348, which acts as the Proton acceptor. The UDP-N-acetyl-alpha-D-glucosamine site is built by Tyr-351 and Asn-362. Residues Ala-365, 371–372 (NY), Ser-390, Ser-408, and Arg-425 each bind acetyl-CoA.

In the N-terminal section; belongs to the N-acetylglucosamine-1-phosphate uridyltransferase family. The protein in the C-terminal section; belongs to the transferase hexapeptide repeat family. Homotrimer. The cofactor is Mg(2+).

The protein resides in the cytoplasm. The enzyme catalyses alpha-D-glucosamine 1-phosphate + acetyl-CoA = N-acetyl-alpha-D-glucosamine 1-phosphate + CoA + H(+). It catalyses the reaction N-acetyl-alpha-D-glucosamine 1-phosphate + UTP + H(+) = UDP-N-acetyl-alpha-D-glucosamine + diphosphate. It functions in the pathway nucleotide-sugar biosynthesis; UDP-N-acetyl-alpha-D-glucosamine biosynthesis; N-acetyl-alpha-D-glucosamine 1-phosphate from alpha-D-glucosamine 6-phosphate (route II): step 2/2. Its pathway is nucleotide-sugar biosynthesis; UDP-N-acetyl-alpha-D-glucosamine biosynthesis; UDP-N-acetyl-alpha-D-glucosamine from N-acetyl-alpha-D-glucosamine 1-phosphate: step 1/1. It participates in bacterial outer membrane biogenesis; LPS lipid A biosynthesis. In terms of biological role, catalyzes the last two sequential reactions in the de novo biosynthetic pathway for UDP-N-acetylglucosamine (UDP-GlcNAc). The C-terminal domain catalyzes the transfer of acetyl group from acetyl coenzyme A to glucosamine-1-phosphate (GlcN-1-P) to produce N-acetylglucosamine-1-phosphate (GlcNAc-1-P), which is converted into UDP-GlcNAc by the transfer of uridine 5-monophosphate (from uridine 5-triphosphate), a reaction catalyzed by the N-terminal domain. The chain is Bifunctional protein GlmU from Cereibacter sphaeroides (strain ATCC 17023 / DSM 158 / JCM 6121 / CCUG 31486 / LMG 2827 / NBRC 12203 / NCIMB 8253 / ATH 2.4.1.) (Rhodobacter sphaeroides).